A 345-amino-acid chain; its full sequence is Mitochondrial substrate carrier family protein J (345 aa).

At 1 to 31 (MSSSHTIQETKEVHTKTNKRIQWDDLDPKRY) the chain is on the mitochondrial intermembrane side. 3 Solcar repeats span residues 30–118 (RYYF…VKQG), 129–217 (DLLF…SKSK), and 255–342 (EDPI…VKKL). The chain crosses the membrane as a helical span at residues 32–52 (YFYNFLLGGSIDLLMFPLDVI). Residues 53-88 (RTRLQVQGSQNVIQSFPQYNGTFDGFKKLIRLEGKR) are Mitochondrial matrix-facing. The helical transmembrane segment at 89–110 (ALYKGFLTSECGYLCSRAIYFG) threads the bilayer. The Mitochondrial intermembrane segment spans residues 111-129 (SYEFVKQGFLKGRSDSDSD). The helical transmembrane segment at 130-150 (LLFVTTISGAISEALASVIWV) threads the bilayer. Residues 151 to 191 (PFDVATQSVQIQGSLSKPKYKGGSDVFKKIYGERGIKGLYK) are Mitochondrial matrix-facing. A helical membrane pass occupies residues 192 to 208 (GFGATIIRNVPYSGIWW). At 209–257 (GTYEISKSKLTQFNIRQKLGLKERSSHSLAVSAEIDKNNPSHEVENEDP) the chain is on the mitochondrial intermembrane side. A helical transmembrane segment spans residues 258–278 (IIHFISGFFAAVFATSITNPL). Residues 279–316 (DVAKTRLQTGVFPENEKPNFYTIIKSTIRKEGIRALWK) lie on the Mitochondrial matrix side of the membrane. A helical membrane pass occupies residues 317 to 337 (GLVPSLLTSTPYSMISIFLYE). Residues 338–345 (EVKKLSLK) lie on the Mitochondrial intermembrane side of the membrane.

It belongs to the mitochondrial carrier (TC 2.A.29) family.

The protein resides in the mitochondrion inner membrane. Its function is as follows. Mitochondrial solute carriers shuttle metabolites, nucleotides, and cofactors through the mitochondrial inner membrane. The polypeptide is Mitochondrial substrate carrier family protein J (mcfJ) (Dictyostelium discoideum (Social amoeba)).